The sequence spans 729 residues: Ubiquitin carboxyl-terminal hydrolase BAP1 (729 aa).

Positions 4–235 constitute a UCH catalytic domain; it reads GWLELESDPG…IRFNLMAVVP (232 aa). The short motif at 56 to 60 is the Arg-finger motif element; sequence RRSRR. Cys91 (nucleophile) is an active-site residue. His169 serves as the catalytic Proton donor. The residue at position 292 (Ser292) is a Phosphoserine. The disordered stretch occupies residues 301–351; the sequence is APAASEGNHTDGAEEAAGSCAQAPSHSPPNKPKLVVKPPGSSLNGVHPNPT. An HBM-like motif motif is present at residues 363-366; sequence NHNY. 2 positions are modified to phosphoserine: Ser369 and Ser395. Disordered stretches follow at residues 372–435 and 464–524; these read QEEE…SADG and SIKT…SPVT. Acidic residues predominate over residues 395 to 409; that stretch reads SDDEDDYEDDEEDDV. A compositionally biased stretch (polar residues) spans 480–524; sequence THSQPSPTPSNESTDTASEIGSAFNSPLRSPIRSANPTRPSSPVT. At Thr493 the chain carries Phosphothreonine. Residues Ser521, Ser537, Ser585, and Ser597 each carry the phosphoserine modification. The interval 575 to 623 is disordered; it reads LTEGGKGSSPSIRPIQGSQGSSSPVEKEVVEATDSREKTGMVRPGEPLS. Residues 582-598 are compositionally biased toward polar residues; that stretch reads SSPSIRPIQGSQGSSSP. The interval 596 to 721 is interaction with BRCA1; the sequence is SSPVEKEVVE…QRKPDRRKRS (126 aa). Residues 599 to 614 are compositionally biased toward basic and acidic residues; that stretch reads VEKEVVEATDSREKTG. Residues 636-656 adopt a coiled-coil conformation; that stretch reads LKCVEAEIANYEACLKEEVEK. The interaction with YY1 stretch occupies residues 642-686; it reads EIANYEACLKEEVEKRKKFKIDDQRRTHNYDEFICTFISMLAQEG. Positions 670-698 constitute a ULD domain; it reads NYDEFICTFISMLAQEGMLANLVEQNISV. Residues 699-701 form an interaction with nucleosomal DNA forming a DNA clamp with ASXL1 region; sequence RRR. The Classical bipartite Nuclear localization signal (NLS) motif lies at 699-722; it reads RRRQGVSIGRLHKQRKPDRRKRSR. The interval 703–729 is disordered; that stretch reads GVSIGRLHKQRKPDRRKRSRPYKAKRQ. Positions 713-729 are positively charged C-terminal extension (CTE); sequence RKPDRRKRSRPYKAKRQ. A Non-classical PY-nuclear localization signal (PY-NLS) motif is present at residues 717–724; that stretch reads RRKRSRPY.

This sequence belongs to the peptidase C12 family. BAP1 subfamily. Core component of the polycomb repressive deubiquitinase (PR-DUB) complex, at least composed of BAP1, one of ASXL1, ASXL2 or (probably) ASXL3, and one of MBD5 or MBD6. The PR-DUB core associates with a number of accessory proteins, including FOXK1, FOXK2, KDM1B, HCFC1, YY1 and OGT; KDM1B specifically associates with ASXL2 PR-DUB complexes. The BAP1 deubiquitinase activity is not required for PR-DUB assembly. Homodimerizes (via coiled-coil hinge-region between the UCH and ULD domains) to mediate assembly of 2 copies of the BAP1-ASXL heterodimer into a bisymmetric tetramer; dimerization enhances association with nucleosomes. The PR-DUB complex associates with nucleosomes to mediate deubiquitination of 'lys-120' of histone H2AK118ub1 substrates; the association requires the positively charged C-terminal tail of BAP1. Interacts (via ULD domain) with ASXL1 (via DEUBAD domain); the interaction is direct and forms a ubiquitin binding cleft. The interaction with ASXL1 stabilizes BAP1 but is not required for nucleosome binding. Associates (via C-terminus) with nucleosome and chromatosome complexes through direct interaction with DNA and the histone3/4 dimer; this association displaces the histone-2A C-terminal tail, extending and orienting the H2AK118ub1 substrate towards the BAP1 deubiquitinase active site. Also interacts (via arginine finger) directly with the histone H2A-H2B acidic patch; this interaction is not critical for nucleosome-chromatosome association but may play a role in orienting the H2AK118ub1 substrate towards the PR-DUB complex active site. Interacts with BRCA1 (via the RING finger). Interacts (via HBM-like motif) with HCFC1. Interacts (via a C-terminal region overlapping the ULD domain) with YY1; the interaction is direct and requires the interaction with HCFC1. Interacts (when phosphorylated at Thr-493) with FOXK1. Interacts (when phosphorylated at Thr-493) with FOXK2; leading to recruitment of the PR-DUB complex and repression of FOXK2 target genes. Interacts (via non-classical PY-NLS) with TNPO1/transportin-1 (via HEAT repeats 8-12); the interaction is direct, mediates BAP1 nuclear localization and disrupts BAP1 homodimerization. Interacts (via C-terminus) with KPNA1/importin alpha5 and KPNA2/importin alpha1; these interactions can contribute to BAP1 nuclear localization but are less important than the interaction with TNPO1/transportin-1. The interaction with TNPO1/transportin-1 disrupts homodimerization and blocks ubiquitination by UBE2O. In terms of processing, ubiquitinated: monoubiquitinated at multiple sites within its nuclear localization signal (NLS) BY UBE2O, leading to cytoplasmic retention. Able to mediate autodeubiquitination via intramolecular interactions to counteract cytoplasmic retention. Monoubiquitinated on at least 4 sites near or within its PY-NLS. In terms of tissue distribution, highly expressed in testis, placenta and ovary. Expressed in breast. levels in the placenta increase over the course of pregnancy.

The protein localises to the cytoplasm. Its subcellular location is the nucleus. The protein resides in the chromosome. The catalysed reaction is Thiol-dependent hydrolysis of ester, thioester, amide, peptide and isopeptide bonds formed by the C-terminal Gly of ubiquitin (a 76-residue protein attached to proteins as an intracellular targeting signal).. In terms of biological role, deubiquitinating enzyme that plays a key role in chromatin by mediating deubiquitination of histone H2A and HCFC1. Catalytic component of the polycomb repressive deubiquitinase (PR-DUB) complex, a complex that specifically mediates deubiquitination of histone H2A monoubiquitinated at 'Lys-120' (H2AK119ub1). Does not deubiquitinate monoubiquitinated histone H2B. The PR-DUB complex is an epigenetic regulator of gene expression and acts as a transcriptional coactivator, affecting genes involved in development, cell communication, signaling, cell proliferation and cell viability. Antagonizes PRC1 mediated H2AK119ub1 monoubiquitination. As part of the PR-DUB complex, associates with chromatin enriched in histone marks H3K4me1, H3K4me3, and H3K27Ac, but not in H3K27me3. Recruited to specific gene-regulatory regions by YY1. Acts as a regulator of cell growth by mediating deubiquitination of HCFC1 N-terminal and C-terminal chains, with some specificity toward 'Lys-48'-linked polyubiquitin chains compared to 'Lys-63'-linked polyubiquitin chains. Deubiquitination of HCFC1 does not lead to increase stability of HCFC1. Interferes with the BRCA1 and BARD1 heterodimer activity by inhibiting their ability to mediate ubiquitination and autoubiquitination. It however does not mediate deubiquitination of BRCA1 and BARD1. Able to mediate autodeubiquitination via intramolecular interactions to counteract monoubiquitination at the nuclear localization signal (NLS), thereby protecting it from cytoplasmic sequestration. Negatively regulates epithelial-mesenchymal transition (EMT) of trophoblast stem cells during placental development by regulating genes involved in epithelial cell integrity, cell adhesion and cytoskeletal organization. The chain is Ubiquitin carboxyl-terminal hydrolase BAP1 from Homo sapiens (Human).